The following is a 224-amino-acid chain: MAITDWPVDERPRERLLQKGAATLSDAELLAIFLRVGVVGKSAVDLAREMLLNFGSLRALLTASHHDFCVHKGLGDAKYALLQAVLEMGRRHLAEEWQRGDGLDSPLRVRQYLSATLRDRCREVFAVIFLDNRHRVLRFEEMFLGTIDGATVHIREVLKRALELNAAALIVAHNHPSGVAEPSAADLSLTRRLDQAMQLLDLRLLDHFIVGDGEPLSLREQGGW.

In terms of domain architecture, MPN spans 102–224; it reads GLDSPLRVRQ…PLSLREQGGW (123 aa). The Zn(2+) site is built by His-173, His-175, and Asp-186. Residues 173–186 carry the JAMM motif motif; sequence HNHPSGVAEPSAAD.

The protein belongs to the UPF0758 family.

The chain is UPF0758 protein AFE_0358 from Acidithiobacillus ferrooxidans (strain ATCC 23270 / DSM 14882 / CIP 104768 / NCIMB 8455) (Ferrobacillus ferrooxidans (strain ATCC 23270)).